We begin with the raw amino-acid sequence, 83 residues long: Kappa-theraphotoxin-Cg2a (83 aa).

Positions 1–21 are cleaved as a signal peptide; the sequence is MKGSAFAIILGLVVLCACSFA. The propeptide occupies 22–53; the sequence is EDEQDQFASPNELLRSMFLESRHELIPEVEGR. 3 disulfide bridges follow: Cys-55–Cys-69, Cys-62–Cys-74, and Cys-68–Cys-78. Residue Leu-82 is modified to Leucine amide.

The protein belongs to the neurotoxin 30 (phrixotoxin) family. In terms of tissue distribution, expressed by the venom gland.

The protein localises to the secreted. Functionally, inhibits voltage-gated potassium channels of the subtype Kv4.1/KCND1 with high affinity and shows weak effects on Kv4.2/KCND2 and Kv2.1/KCNB1 subtypes. The toxin modifies the gating behavior of the channel and may interact with the S3-S4 extracellular loop. This chain is Kappa-theraphotoxin-Cg2a, found in Chilobrachys guangxiensis (Chinese earth tiger tarantula).